Here is a 463-residue protein sequence, read N- to C-terminus: Argininosuccinate lyase (463 aa).

It belongs to the lyase 1 family. Argininosuccinate lyase subfamily.

It is found in the cytoplasm. It carries out the reaction 2-(N(omega)-L-arginino)succinate = fumarate + L-arginine. It functions in the pathway amino-acid biosynthesis; L-arginine biosynthesis; L-arginine from L-ornithine and carbamoyl phosphate: step 3/3. The polypeptide is Argininosuccinate lyase (Prochlorococcus marinus (strain NATL1A)).